The following is a 209-amino-acid chain: CMRF35-like molecule 7 (209 aa).

An N-terminal signal peptide occupies residues 1–17 (MWLSPALLLLSFPGCLS). The region spanning 18–120 (IQGPALVRGP…TDRGTRVKVN (103 aa)) is the Ig-like V-type domain. The Extracellular portion of the chain corresponds to 18–157 (IQGPALVRGP…SSDLQKRTYY (140 aa)). Cys36 and Cys104 are joined by a disulfide. An N-linked (GlcNAc...) asparagine glycan is attached at Asn97. The chain crosses the membrane as a helical span at residues 158–178 (MLLVFVKVPALLILVGAVLWL). Over 179–209 (KRSTQKVPEEQWRHTLCSDLDSELLAKDISP) the chain is Cytoplasmic. Ser196 is subject to Phosphoserine.

This sequence belongs to the CD300 family. Interacts with TYROBP, which enhances cell surface expression and activation properties. May interact with HCST. Post-translationally, N-glycosylated. Expressed in myeloid cells (at protein level).

Its subcellular location is the cell membrane. In terms of biological role, acts as an activating immune receptor in mast cells through its interaction with ITAM-bearing adapter TYROBP. The chain is CMRF35-like molecule 7 (Cd300lb) from Mus musculus (Mouse).